A 156-amino-acid polypeptide reads, in one-letter code: ATP synthase subunit b (156 aa).

Residues 3-23 (ITFTIFAQSLAFAALIWIVAT) traverse the membrane as a helical segment.

This sequence belongs to the ATPase B chain family. As to quaternary structure, F-type ATPases have 2 components, F(1) - the catalytic core - and F(0) - the membrane proton channel. F(1) has five subunits: alpha(3), beta(3), gamma(1), delta(1), epsilon(1). F(0) has three main subunits: a(1), b(2) and c(10-14). The alpha and beta chains form an alternating ring which encloses part of the gamma chain. F(1) is attached to F(0) by a central stalk formed by the gamma and epsilon chains, while a peripheral stalk is formed by the delta and b chains.

The protein resides in the cell inner membrane. Its function is as follows. F(1)F(0) ATP synthase produces ATP from ADP in the presence of a proton or sodium gradient. F-type ATPases consist of two structural domains, F(1) containing the extramembraneous catalytic core and F(0) containing the membrane proton channel, linked together by a central stalk and a peripheral stalk. During catalysis, ATP synthesis in the catalytic domain of F(1) is coupled via a rotary mechanism of the central stalk subunits to proton translocation. In terms of biological role, component of the F(0) channel, it forms part of the peripheral stalk, linking F(1) to F(0). The chain is ATP synthase subunit b from Xylella fastidiosa (strain M23).